The chain runs to 91 residues: Probable Fe(2+)-trafficking protein (91 aa).

This sequence belongs to the Fe(2+)-trafficking protein family.

Could be a mediator in iron transactions between iron acquisition and iron-requiring processes, such as synthesis and/or repair of Fe-S clusters in biosynthetic enzymes. The sequence is that of Probable Fe(2+)-trafficking protein from Xanthomonas euvesicatoria pv. vesicatoria (strain 85-10) (Xanthomonas campestris pv. vesicatoria).